Consider the following 275-residue polypeptide: Translation initiation factor 2 subunit alpha (275 aa).

Residues 12–83 form the S1 motif domain; it reads GEFVVATVKR…RKGHIDLSLR (72 aa).

Belongs to the eIF-2-alpha family. As to quaternary structure, heterotrimer composed of an alpha, a beta and a gamma chain.

EIF-2 functions in the early steps of protein synthesis by forming a ternary complex with GTP and initiator tRNA. The protein is Translation initiation factor 2 subunit alpha (eif2a) of Pyrococcus abyssi (strain GE5 / Orsay).